The primary structure comprises 362 residues: Serine/threonine-protein kinase ZRK4 (362 aa).

The tract at residues 1–23 (MNDQKMSCWRKKSKKKNSEANQR) is disordered. The 328-residue stretch at 35–362 (LEDLIELCNG…KELKRIERWT (328 aa)) folds into the Protein kinase domain. ATP-binding positions include 41–49 (LCNGKSNPI) and Lys-89. Residue Asp-185 is the Proton acceptor of the active site.

This sequence belongs to the protein kinase superfamily. Ser/Thr protein kinase family. ZRK subfamily.

It carries out the reaction L-seryl-[protein] + ATP = O-phospho-L-seryl-[protein] + ADP + H(+). The enzyme catalyses L-threonyl-[protein] + ATP = O-phospho-L-threonyl-[protein] + ADP + H(+). This is Serine/threonine-protein kinase ZRK4 from Arabidopsis thaliana (Mouse-ear cress).